We begin with the raw amino-acid sequence, 151 residues long: Small ribosomal subunit protein uS15 (151 aa).

The segment at 1-20 (MARLHSGKRGSSGSTRPLRT) is disordered.

The protein belongs to the universal ribosomal protein uS15 family. Part of the 30S ribosomal subunit.

The polypeptide is Small ribosomal subunit protein uS15 (Methanococcus maripaludis (strain C7 / ATCC BAA-1331)).